Reading from the N-terminus, the 719-residue chain is Calpain-12 (719 aa).

Residues 45–341 (LFRDPYFPAG…FDTVQICSLS (297 aa)) form the Calpain catalytic domain. Residues Cys105, His259, and Asn283 contribute to the active site. Positions 342 to 540 (PEVLGPSPEG…DDVISADLQS (199 aa)) are domain III. Over residues 393 to 402 (DEEDDEDEEG) the composition is skewed to acidic residues. The segment at 393–418 (DEEDDEDEEGPWGGWGAAGARGPARG) is disordered. The interval 541 to 719 (LQGPYLPLEL…RQWMEVATFS (179 aa)) is domain IV. The 36-residue stretch at 620–655 (GYLLEWQAIFNKFDEDTSGTMNSYELRLALNAAGFH) folds into the EF-hand domain. Residues Asp633, Asp635, Ser637, Thr639, and Glu644 each coordinate Ca(2+).

The protein belongs to the peptidase C2 family.

Its function is as follows. Calcium-regulated non-lysosomal thiol-protease. The sequence is that of Calpain-12 (CAPN12) from Homo sapiens (Human).